The chain runs to 336 residues: Flavonol synthase/flavanone 3-hydroxylase (336 aa).

The disordered stretch occupies residues 99-118; sequence EKESVAKPEDSKDIEGYGTK. The 101-residue stretch at 196–296 folds into the Fe2OG dioxygenase domain; it reads MAEYMMKINY…RMSWPVFLEP (101 aa). Position 204-206 (204-206) interacts with 2-oxoglutarate; that stretch reads NYY. Residues His-221, Asp-223, and His-277 each coordinate Fe cation. Residue 287–289 participates in 2-oxoglutarate binding; that stretch reads RMS.

This sequence belongs to the iron/ascorbate-dependent oxidoreductase family. The cofactor is L-ascorbate. It depends on Fe(2+) as a cofactor. As to expression, expressed in young seedlings (at protein level). Expressed in roots, emerging leaves, shoot-root transition zone, trichomes, flowers and siliques. In cotyledons, expressed mostly on the adaxial side and only in guard cells on the abaxial side.

The protein localises to the cytoplasm. The protein resides in the nucleus. The enzyme catalyses a (2R,3R)-dihydroflavonol + 2-oxoglutarate + O2 = a flavonol + succinate + CO2 + H2O. It carries out the reaction a (2S)-flavan-4-one + 2-oxoglutarate + O2 = a (2R,3R)-dihydroflavonol + succinate + CO2. It functions in the pathway secondary metabolite biosynthesis; flavonoid biosynthesis. Functionally, catalyzes the formation of flavonols from dihydroflavonols. It can act on dihydrokaempferol to produce kaempferol, on dihydroquercetin to produce quercitin and on dihydromyricetin to produce myricetin. In vitro catalyzes the oxidation of both enantiomers of naringenin to give both cis- and trans-dihydrokaempferol. The polypeptide is Flavonol synthase/flavanone 3-hydroxylase (FLS1) (Arabidopsis thaliana (Mouse-ear cress)).